Consider the following 259-residue polypeptide: UPF0246 protein NGK_0633 (259 aa).

This sequence belongs to the UPF0246 family.

This is UPF0246 protein NGK_0633 from Neisseria gonorrhoeae (strain NCCP11945).